The primary structure comprises 161 residues: Cyclic pyranopterin monophosphate synthase (161 aa).

Substrate is bound by residues 73–75 and 110–111; these read LCH and ME. Aspartate 125 is a catalytic residue.

The protein belongs to the MoaC family. In terms of assembly, homohexamer; trimer of dimers.

The enzyme catalyses (8S)-3',8-cyclo-7,8-dihydroguanosine 5'-triphosphate = cyclic pyranopterin phosphate + diphosphate. The protein operates within cofactor biosynthesis; molybdopterin biosynthesis. In terms of biological role, catalyzes the conversion of (8S)-3',8-cyclo-7,8-dihydroguanosine 5'-triphosphate to cyclic pyranopterin monophosphate (cPMP). The sequence is that of Cyclic pyranopterin monophosphate synthase from Pseudomonas syringae pv. tomato (strain ATCC BAA-871 / DC3000).